We begin with the raw amino-acid sequence, 136 residues long: Sec-independent protein translocase protein TatB (136 aa).

Residues 1–21 traverse the membrane as a helical segment; the sequence is MFDIGFPELALVAVIGLLVLG. A disordered region spans residues 89–136; the sequence is YEDMVEKNPATPMSSKASTPQTPSSGPDPQPVESHSHSDDASKQHDRS. The span at 99 to 115 shows a compositional bias: polar residues; that stretch reads TPMSSKASTPQTPSSGP. Over residues 122 to 136 the composition is skewed to basic and acidic residues; that stretch reads SHSHSDDASKQHDRS.

It belongs to the TatB family. The Tat system comprises two distinct complexes: a TatABC complex, containing multiple copies of TatA, TatB and TatC subunits, and a separate TatA complex, containing only TatA subunits. Substrates initially bind to the TatABC complex, which probably triggers association of the separate TatA complex to form the active translocon.

It is found in the cell inner membrane. Part of the twin-arginine translocation (Tat) system that transports large folded proteins containing a characteristic twin-arginine motif in their signal peptide across membranes. Together with TatC, TatB is part of a receptor directly interacting with Tat signal peptides. TatB may form an oligomeric binding site that transiently accommodates folded Tat precursor proteins before their translocation. The polypeptide is Sec-independent protein translocase protein TatB (Hahella chejuensis (strain KCTC 2396)).